Here is a 508-residue protein sequence, read N- to C-terminus: 2,3-bisphosphoglycerate-independent phosphoglycerate mutase (508 aa).

Mn(2+) contacts are provided by D14 and S64. S64 serves as the catalytic Phosphoserine intermediate. Substrate contacts are provided by residues H125, R155–D156, R187, R193, R259–R262, and K332. Mn(2+) contacts are provided by D399, H403, D440, H441, and H459.

It belongs to the BPG-independent phosphoglycerate mutase family. Monomer. It depends on Mn(2+) as a cofactor.

The catalysed reaction is (2R)-2-phosphoglycerate = (2R)-3-phosphoglycerate. It functions in the pathway carbohydrate degradation; glycolysis; pyruvate from D-glyceraldehyde 3-phosphate: step 3/5. Functionally, catalyzes the interconversion of 2-phosphoglycerate and 3-phosphoglycerate. The sequence is that of 2,3-bisphosphoglycerate-independent phosphoglycerate mutase from Pseudomonas fluorescens (strain Pf0-1).